Here is a 654-residue protein sequence, read N- to C-terminus: Insulin receptor substrate 1 (654 aa).

The 105-residue stretch at 3-107 (DIKKCGYLRK…WYQAILEVQA (105 aa)) folds into the PH domain. Y36 bears the Phosphotyrosine mark. Residues 126–230 (FREVWQVSVR…EAMKSLSEEF (105 aa)) form the IRS-type PTB domain. Residues 228–329 (EEFRPRTKSQ…EYGSSPGVLE (102 aa)) are disordered. Residues 235-245 (KSQSLSSTPIS) are compositionally biased toward polar residues. A Phosphoserine modification is found at S276. The span at 307–321 (NESSADYGSASSDEY) shows a compositional bias: polar residues. A Phosphotyrosine; by INSR modification is found at Y345. Short sequence motifs (YXXM motif) lie at residues 345–348 (YISM), 384–387 (YAMM), 398–401 (YMPM), 411–414 (YMPM), 430–433 (YVMM), and 466–469 (YMNM). Residues Y398 and Y411 each carry the phosphotyrosine; by INSR modification. At Y430 the chain carries Phosphotyrosine. Disordered regions lie at residues 473-494 (SRSA…GGPC) and 507-532 (YKME…VNAG). The span at 514-524 (SARASCSSSSD) shows a compositional bias: low complexity. Y563 carries the phosphotyrosine; by INSR modification.

Interacts with the NPXY motif of tyrosine-phosphorylated igf1r and insr via the PTB domain. Binds to phosphatidylinositol 3-kinase p85 subunit via the phosphorylated YXXM motifs.

Functionally, may mediate the control of various cellular processes by insulin. When phosphorylated by the insulin receptor binds specifically to various cellular proteins containing SH2 domains such as phosphatidylinositol 3-kinase p85 subunit or grb2. Activates phosphatidylinositol 3-kinase when bound to the regulatory p85 subunit. The chain is Insulin receptor substrate 1 from Xenopus tropicalis (Western clawed frog).